Consider the following 62-residue polypeptide: MSDKCGNCDCADKSQCVKKGTSYGVVIVEAEKSHFEEVAAGEENGGCKCGTSCSCTDCKCGK.

This sequence belongs to the metallothionein superfamily. Type 15 family.

Its function is as follows. Metallothioneins have a high content of cysteine residues that bind various heavy metals. In Oryza sativa subsp. indica (Rice), this protein is Metallothionein-like protein 3A (MT3A).